The following is a 360-amino-acid chain: Peptide chain release factor 1 (360 aa).

The residue at position 235 (Gln235) is an N5-methylglutamine. Residues 284-313 form a disordered region; the sequence is AKRQQAEASTRRNLLGSGDRSDRNRTYNFP.

It belongs to the prokaryotic/mitochondrial release factor family. Post-translationally, methylated by PrmC. Methylation increases the termination efficiency of RF1.

The protein localises to the cytoplasm. Its function is as follows. Peptide chain release factor 1 directs the termination of translation in response to the peptide chain termination codons UAG and UAA. This Citrobacter koseri (strain ATCC BAA-895 / CDC 4225-83 / SGSC4696) protein is Peptide chain release factor 1.